A 1694-amino-acid polypeptide reads, in one-letter code: Clathrin heavy chain (1694 aa).

Residues 1 to 478 (MTNLPIRFQE…HDRKLALSIY (478 aa)) are globular terminal domain. 7 WD40-like repeat regions span residues 23–67 (SIGF…KQMK), 68–107 (TDAA…MQEP), 108–149 (LEFW…PDLQ), 150–195 (NTEI…QSIE), 196–256 (GHAA…EIGA), 257–300 (SDFP…ISNE), and 301–329 (NIFV…VSID). The interval 448–464 (EKWLTEDKLECSEQLGD) is binding site for the uncoating ATPase, involved in lattice disassembly. The tract at residues 479-522 (YRANASDKVITLFAETGEFDKIIAYCKKFNYKPDFMFLLQRMAN) is flexible linker. Residues 523 to 1694 (ANPMGAADFA…QQNYNQYGGF (1172 aa)) are heavy chain arm. CHCR repeat units lie at residues 537-681 (KEEG…QNLQ), 687-829 (AVSY…QEDY), 834-973 (IMSV…SLID), 980-1125 (LPES…VKEC), 1129-1270 (FIKA…FRLA), 1275-1421 (INII…LLIN), and 1424-1567 (LSVL…NSAF). Residues 1214–1523 (AAKVLYTNIS…YLYKKNNRWA (310 aa)) form an involved in binding clathrin light chain region. Residues 1551 to 1694 (GEELLQYFVD…QQNYNQYGGF (144 aa)) form a trimerization region. The stretch at 1610–1640 (KVDQLVDDFKARQKKTEEEKEQQNIESSQYQ) forms a coiled coil.

Belongs to the clathrin heavy chain family. In terms of assembly, clathrin coats are formed from molecules containing 3 heavy chains and 3 light chains.

It is found in the cytoplasmic vesicle membrane. Its subcellular location is the membrane. It localises to the coated pit. Its function is as follows. Clathrin is the major protein of the polyhedral coat of coated pits and vesicles. The chain is Clathrin heavy chain (chcA) from Dictyostelium discoideum (Social amoeba).